The primary structure comprises 420 residues: Torsin-4A (420 aa).

Residues 130-150 (CLLLFIAIVCFQIFNAIENLD) traverse the membrane as a helical segment. Position 202-209 (202-209 (GPSGVGKS)) interacts with ATP.

It belongs to the ClpA/ClpB family. Torsin subfamily.

The protein resides in the membrane. This chain is Torsin-4A (tor4a), found in Xenopus tropicalis (Western clawed frog).